The sequence spans 217 residues: tRNA (guanine-N(7)-)-methyltransferase (217 aa).

S-adenosyl-L-methionine is bound by residues E44, E69, D96, and D118. D118 is an active-site residue. Residues K122, D154, and 191 to 194 (TEYE) contribute to the substrate site.

It belongs to the class I-like SAM-binding methyltransferase superfamily. TrmB family.

The enzyme catalyses guanosine(46) in tRNA + S-adenosyl-L-methionine = N(7)-methylguanosine(46) in tRNA + S-adenosyl-L-homocysteine. The protein operates within tRNA modification; N(7)-methylguanine-tRNA biosynthesis. In terms of biological role, catalyzes the formation of N(7)-methylguanine at position 46 (m7G46) in tRNA. The protein is tRNA (guanine-N(7)-)-methyltransferase of Bacillus thuringiensis (strain Al Hakam).